A 26-amino-acid chain; its full sequence is Superoxide dismutase [Cu-Zn] (26 aa).

Residue cysteine 7 is the site of S-palmitoyl cysteine attachment.

It belongs to the Cu-Zn superoxide dismutase family. Homotrimer. It depends on Cu cation as a cofactor. Zn(2+) serves as cofactor.

It localises to the cytoplasm. The protein resides in the nucleus. The catalysed reaction is 2 superoxide + 2 H(+) = H2O2 + O2. Its function is as follows. Destroys radicals which are normally produced within the cells and which are toxic to biological systems. This Paralichthys olivaceus (Bastard halibut) protein is Superoxide dismutase [Cu-Zn] (sod1).